The primary structure comprises 259 residues: Leucyl/phenylalanyl-tRNA--protein transferase (259 aa).

It belongs to the L/F-transferase family.

It is found in the cytoplasm. It catalyses the reaction N-terminal L-lysyl-[protein] + L-leucyl-tRNA(Leu) = N-terminal L-leucyl-L-lysyl-[protein] + tRNA(Leu) + H(+). The catalysed reaction is N-terminal L-arginyl-[protein] + L-leucyl-tRNA(Leu) = N-terminal L-leucyl-L-arginyl-[protein] + tRNA(Leu) + H(+). It carries out the reaction L-phenylalanyl-tRNA(Phe) + an N-terminal L-alpha-aminoacyl-[protein] = an N-terminal L-phenylalanyl-L-alpha-aminoacyl-[protein] + tRNA(Phe). Its function is as follows. Functions in the N-end rule pathway of protein degradation where it conjugates Leu, Phe and, less efficiently, Met from aminoacyl-tRNAs to the N-termini of proteins containing an N-terminal arginine or lysine. In Teredinibacter turnerae (strain ATCC 39867 / T7901), this protein is Leucyl/phenylalanyl-tRNA--protein transferase.